The primary structure comprises 180 residues: Small ribosomal subunit protein uS5 (180 aa).

The disordered stretch occupies residues 1–20; sequence MAKMQGRMQGKVAPGDDRGD. The 64-residue stretch at 22 to 85 folds into the S5 DRBM domain; the sequence is LKEKMVAINR…DEARRKMIKV (64 aa).

Belongs to the universal ribosomal protein uS5 family. Part of the 30S ribosomal subunit. Contacts proteins S4 and S8.

Functionally, with S4 and S12 plays an important role in translational accuracy. Located at the back of the 30S subunit body where it stabilizes the conformation of the head with respect to the body. The polypeptide is Small ribosomal subunit protein uS5 (Nitrosospira multiformis (strain ATCC 25196 / NCIMB 11849 / C 71)).